The following is a 375-amino-acid chain: Platelet-derived growth factor receptor-like protein (375 aa).

An N-terminal signal peptide occupies residues 1–21 (MKFWLLLGLLLLHEALEDVAG). Residues 20 to 63 (AGQHSPKNKRPKEQGENRIKPTNKKAKPKIPKVKDRDSTDSTAK) form a disordered region. The segment covering 40 to 50 (PTNKKAKPKIP) has biased composition (basic residues). Residues 47 to 159 (PKIPKVKDRD…GYICRRDEAK (113 aa)) enclose the Ig-like C2-type 1 domain. A disulfide bond links cysteine 96 and cysteine 143. Residue asparagine 219 is glycosylated (N-linked (GlcNAc...) asparagine). The 104-residue stretch at 272-375 (PSTTILASSN…TTVATTVEFS (104 aa)) folds into the Ig-like C2-type 2 domain. Cysteine 293 and cysteine 357 are disulfide-bonded.

As to quaternary structure, forms a complex composed of PDGFRL, TNK2 and GRB2.

The protein resides in the secreted. This is Platelet-derived growth factor receptor-like protein (Pdgfrl) from Mus musculus (Mouse).